We begin with the raw amino-acid sequence, 252 residues long: Ubiquinone biosynthesis O-methyltransferase (252 aa).

S-adenosyl-L-methionine contacts are provided by R41, G72, D93, and M136.

The protein belongs to the methyltransferase superfamily. UbiG/COQ3 family.

It carries out the reaction a 3-demethylubiquinol + S-adenosyl-L-methionine = a ubiquinol + S-adenosyl-L-homocysteine + H(+). It catalyses the reaction a 3-(all-trans-polyprenyl)benzene-1,2-diol + S-adenosyl-L-methionine = a 2-methoxy-6-(all-trans-polyprenyl)phenol + S-adenosyl-L-homocysteine + H(+). It participates in cofactor biosynthesis; ubiquinone biosynthesis. O-methyltransferase that catalyzes the 2 O-methylation steps in the ubiquinone biosynthetic pathway. This Rhizobium leguminosarum bv. trifolii (strain WSM2304) protein is Ubiquinone biosynthesis O-methyltransferase.